A 286-amino-acid polypeptide reads, in one-letter code: NAD kinase (286 aa).

The active-site Proton acceptor is Asp68. Residues 68–69, Lys73, 142–143, Arg153, Asp172, 183–188, and Gln242 contribute to the NAD(+) site; these read DG, ND, and TGYSFS.

The protein belongs to the NAD kinase family. Requires a divalent metal cation as cofactor.

Its subcellular location is the cytoplasm. The enzyme catalyses NAD(+) + ATP = ADP + NADP(+) + H(+). Involved in the regulation of the intracellular balance of NAD and NADP, and is a key enzyme in the biosynthesis of NADP. Catalyzes specifically the phosphorylation on 2'-hydroxyl of the adenosine moiety of NAD to yield NADP. This chain is NAD kinase, found in Natranaerobius thermophilus (strain ATCC BAA-1301 / DSM 18059 / JW/NM-WN-LF).